A 323-amino-acid chain; its full sequence is Rhazimal reductase 2 (323 aa).

D53 contributes to the NADP(+) binding site. The Proton donor role is filled by Y58. NADP(+) is bound by residues S167–N168, Q189, W215–S220, and D289–R297.

Belongs to the aldo/keto reductase family. In terms of assembly, monomer.

It carries out the reaction rhazimol + NADP(+) = rhazimal + NADPH + 2 H(+). It participates in alkaloid biosynthesis. Its function is as follows. Oxidoreductase involved in the biosynthesis of akuammilan monoterpene indole alkaloids (MIAs) natural products, components with various biological properties such as antidiabetic, antibacterial, anti-inflammatory, anticancer, and antimalarial activities. Catalyzes the conversion of rhazimal to rhazimol. The chain is Rhazimal reductase 2 from Alstonia scholaris (Dogbane).